A 987-amino-acid chain; its full sequence is MELRALLCWASLATALEETLLNTKLETADLKWVTYPQAEGQWEELSGLDEEQHSVRTYEVCDMKRPGGQAHWLRTGWVPRRGAVHVYATIRFTMMECLSLPRASRSCKETFTVFYYESEADTATAHTPAWMENPYIKVDTVAAEHLTRKRPGAEATGKVNIKTLRLGPLSKAGFYLAFQDQGACMALLSLHLFYKKCSWLITNLTYFPETVPRELVVPVAGSCVANAVPTANPSPSLYCREDGQWAEQQVTGCSCAPGYEAAESNKVCRACGQGTFKPQIGDESCLPCPANSHSNNIGSPVCLCRIGYYRARSDPRSSPCTTPPSAPRSVVHHLNGSTLRLEWSAPLESGGREDLTYAVRCRECRPGGSCLPCGGDMTFDPGPRDLVEPWVAIRGLRPDVTYTFEVAALNGVSTLATGPPPFEPVNVTTDREVPPAVSDIRVTRSSPSSLILSWAIPRAPSGAVLDYEVKYHEKGAEGPSSVRFLKTSENRAELRGLKRGASYLVQVRARSEAGYGPFGQEHHSQTQLDESESWREQLALIAGTAVVGVVLVLVVVIIAVLCLRKQSNGREVEYSDKHGQYLIGHGTKVYIDPFTYEDPNEAVREFAKEIDVSYVKIEEVIGAGEFGEVCRGRLKAPGKKESCVAIKTLKGGYTERQRREFLSEASIMGQFEHPNIIRLEGVVTNSVPVMILTEFMENGALDSFLRLNDGQFTVIQLVGMLRGIASGMRYLAEMSYVHRDLAARNILVNSNLVCKVSDFGLSRFLEENSSDPTYTSSLGGKIPIRWTAPEAIAFRKFTSASDAWSYGIVMWEVMSFGERPYWDMSNQDVINAIEQDYRLPPPPDCPTSLHQLMLDCWQKDRNARPRFPQVVSALDKMIRNPASLKIVARENGGASHPLLDQRQPHYSAFGSVGEWLRAIKMGRYEESFAAAGFGSFEVVSQISAEDLLRIGVTLAGHQKKILASVQHMKSQAKPGAPGGTGGPAQQF.

Positions 1 to 15 are cleaved as a signal peptide; the sequence is MELRALLCWASLATA. Residues 16-539 lie on the Extracellular side of the membrane; sequence LEETLLNTKL…ESESWREQLA (524 aa). The 186-residue stretch at 17 to 202 folds into the Eph LBD domain; the sequence is EETLLNTKLE…FYKKCSWLIT (186 aa). Intrachain disulfides connect cysteine 61/cysteine 184 and cysteine 97/cysteine 107. Residues asparagine 203, asparagine 335, and asparagine 426 are each glycosylated (N-linked (GlcNAc...) asparagine). Fibronectin type-III domains follow at residues 323-432 and 436-529; these read PPSA…TDRE and AVSD…TQLD. Residues 540–560 form a helical membrane-spanning segment; it reads LIAGTAVVGVVLVLVVVIIAV. The Cytoplasmic portion of the chain corresponds to 561–987; the sequence is LCLRKQSNGR…GGTGGPAQQF (427 aa). The Protein kinase domain maps to 615-899; that stretch reads VKIEEVIGAG…ENGGASHPLL (285 aa). ATP-binding positions include 621-629 and lysine 647; that span reads IGAGEFGEV. Aspartate 740 functions as the Proton acceptor in the catalytic mechanism. A phosphoserine mark is found at serine 769, serine 770, serine 911, and serine 943. Residues 907–971 enclose the SAM domain; it reads SAFGSVGEWL…LASVQHMKSQ (65 aa). The interval 965–987 is disordered; it reads VQHMKSQAKPGAPGGTGGPAQQF. Residues 976–987 are compositionally biased toward gly residues; sequence APGGTGGPAQQF. Positions 985–987 match the PDZ-binding motif; sequence QQF.

This sequence belongs to the protein kinase superfamily. Tyr protein kinase family. Ephrin receptor subfamily. In terms of assembly, heterotetramer upon binding of the ligand. The heterotetramer is composed of an ephrin dimer and a receptor dimer. Oligomerization is probably required to induce biological responses. Interacts with RASA1; the interaction depends on EPHB4 tyrosine-phosphorylation. Post-translationally, phosphorylated; autophosphorylation is stimulated by EFNB2. As to expression, expressed in various organ systems, including lung, liver, kidney, intestine, muscle and heart. Expressed in myogenic progenitor cells.

It is found in the cell membrane. The catalysed reaction is L-tyrosyl-[protein] + ATP = O-phospho-L-tyrosyl-[protein] + ADP + H(+). Receptor tyrosine kinase which binds promiscuously transmembrane ephrin-B family ligands residing on adjacent cells, leading to contact-dependent bidirectional signaling into neighboring cells. The signaling pathway downstream of the receptor is referred to as forward signaling while the signaling pathway downstream of the ephrin ligand is referred to as reverse signaling. Together with its cognate ligand/functional ligand EFNB2 it is involved in the regulation of cell adhesion and migration, and plays a central role in heart morphogenesis, angiogenesis and blood vessel remodeling and permeability. EPHB4-mediated forward signaling controls cellular repulsion and segregation from EFNB2-expressing cells. The chain is Ephrin type-B receptor 4 (Ephb4) from Mus musculus (Mouse).